Consider the following 146-residue polypeptide: Large ribosomal subunit protein uL15 (146 aa).

Over residues 1–13 (MKLHELKPAEGSR) the composition is skewed to basic and acidic residues. Residues 1-47 (MKLHELKPAEGSRKSRKRIGRGTGSGLGRNAGKGEKGQKARAGGGVR) are disordered. A compositionally biased stretch (gly residues) spans 21–31 (RGTGSGLGRNA).

It belongs to the universal ribosomal protein uL15 family. Part of the 50S ribosomal subunit.

Binds to the 23S rRNA. In Clostridium kluyveri (strain NBRC 12016), this protein is Large ribosomal subunit protein uL15.